Reading from the N-terminus, the 69-residue chain is Sec-independent protein translocase protein TatA (69 aa).

Residues 1–21 (MFGLGGQELILILLIILLLFG) form a helical membrane-spanning segment.

Belongs to the TatA/E family. In terms of assembly, forms a complex with TatC.

Its subcellular location is the cell inner membrane. In terms of biological role, part of the twin-arginine translocation (Tat) system that transports large folded proteins containing a characteristic twin-arginine motif in their signal peptide across membranes. TatA could form the protein-conducting channel of the Tat system. This Pelodictyon phaeoclathratiforme (strain DSM 5477 / BU-1) protein is Sec-independent protein translocase protein TatA.